The sequence spans 136 residues: Large ribosomal subunit protein uL16 (136 aa).

This sequence belongs to the universal ribosomal protein uL16 family. Part of the 50S ribosomal subunit.

Binds 23S rRNA and is also seen to make contacts with the A and possibly P site tRNAs. In Edwardsiella ictaluri (strain 93-146), this protein is Large ribosomal subunit protein uL16.